Reading from the N-terminus, the 100-residue chain is Small ribosomal subunit protein uS14m (100 aa).

Belongs to the universal ribosomal protein uS14 family.

It localises to the mitochondrion. This chain is Small ribosomal subunit protein uS14m (RPS14), found in Vicia faba (Broad bean).